The sequence spans 137 residues: SMR2 protein (137 aa).

A signal peptide spans 1–18 (MLVVLLTAALLALSSAQN). Residues 14 to 113 (SSAQNTDEEV…LHHRENLRPQ (100 aa)) form a disordered region. Residues 75 to 85 (QQQQPLPVENQ) show a composition bias toward low complexity. Positions 99–110 (PPPETLHHRENL) are enriched in basic and acidic residues.

The protein resides in the secreted. Unknown, male-specific function. The chain is SMR2 protein (Smr2) from Rattus norvegicus (Rat).